The sequence spans 604 residues: Rhotekin-2 (604 aa).

The REM-1 domain occupies 1–74 (MEGQLLRGLA…LQKSKEEIAN (74 aa)). Residues 53–79 (VCSARIQAYTAELQKSKEEIANQTGAR) adopt a coiled-coil conformation. The 107-residue stretch at 281–387 (ADAFAGFLNE…WMGAFRQHFF (107 aa)) folds into the PH domain. The interval 481-590 (LSPIGEPAPD…PVPVPRQKSI (110 aa)) is disordered. Residues 514 to 527 (GRANQSKDSATQAG) show a composition bias toward polar residues. Residues 529–543 (SGASSSPSDPRLSPP) are compositionally biased toward low complexity.

Its function is as follows. May play an important role in lymphopoiesis. This Mus musculus (Mouse) protein is Rhotekin-2 (Rtkn2).